Consider the following 354-residue polypeptide: Protein Wnt-11 (354 aa).

Residues 1–24 (MKPSPQFLLAAFLSLILQTGICYG) form the signal peptide. Asn40 and Asn90 each carry an N-linked (GlcNAc...) asparagine glycan. 11 disulfide bridges follow: Cys80–Cys91, Cys130–Cys138, Cys140–Cys157, Cys209–Cys223, Cys211–Cys218, Cys283–Cys314, Cys299–Cys309, Cys313–Cys353, Cys329–Cys344, Cys331–Cys341, and Cys336–Cys337. Residue Ser215 is the site of O-palmitoleoyl serine; by PORCN attachment. N-linked (GlcNAc...) asparagine glycans are attached at residues Asn300 and Asn304.

This sequence belongs to the Wnt family. Palmitoleoylation is required for efficient binding to frizzled receptors. Depalmitoleoylation leads to Wnt signaling pathway inhibition.

It localises to the secreted. The protein localises to the extracellular space. It is found in the extracellular matrix. Its function is as follows. Ligand for members of the frizzled family of seven transmembrane receptors. May play a role in the formation of dermal structure, both limb and feather buds. Is likely to signal over only few cell diameters. This Coturnix japonica (Japanese quail) protein is Protein Wnt-11 (WNT11).